A 790-amino-acid polypeptide reads, in one-letter code: Protein SEY1 (790 aa).

At 1-692 (MELSEGELSH…KRSIVQHITQ (692 aa)) the chain is on the cytoplasmic side. The 230-residue stretch at 55 to 284 (GNNYHIISVF…VSNELFKPEY (230 aa)) folds into the GB1/RHD3-type G domain. 65–72 (GSQSTGKS) is a binding site for GTP. The chain crosses the membrane as a helical span at residues 693–713 (IPYYIYLIILVLGWNEFMAII). The Lumenal segment spans residues 714–716 (RNP). A helical transmembrane segment spans residues 717–737 (LFFSLSIVLGATVYVLYYLGL). Over 738-790 (LRPALVVAQRTMDEVIVMAKTKLREVLIDDHEVTGRQLNKMAGSKENIELDDM) the chain is Cytoplasmic.

This sequence belongs to the TRAFAC class dynamin-like GTPase superfamily. GB1/RHD3 GTPase family. RHD3 subfamily.

It is found in the endoplasmic reticulum membrane. Cooperates with the reticulon proteins and tubule-shaping DP1 family proteins to generate and maintain the structure of the tubular endoplasmic reticulum network. Has GTPase activity, which is required for its function in ER organization. This chain is Protein SEY1, found in Candida albicans (strain WO-1) (Yeast).